The following is a 512-amino-acid chain: Reduced folate transporter (512 aa).

N-acetylmethionine is present on M1. Residues 1 to 29 (MVPTGQVAEKQAYEEPRQDHELKSWRCLV) are Cytoplasmic-facing. The helical transmembrane segment at 30 to 50 (FYLCFFGFMAQLRPGESFITP) threads the bilayer. I48 and T49 together coordinate folate. Over 51 to 62 (FLLERKFTKEQV) the chain is Extracellular. A helical membrane pass occupies residues 63 to 85 (TNEIIPMLPYSHLAVLVPVFLLT). Residues 86 to 89 (DYLR) are Cytoplasmic-facing. A helical transmembrane segment spans residues 90–110 (YKPVLVLQCLSFVCVWLLLLL). Residues 111 to 114 (GTSV) lie on the Extracellular side of the membrane. A helical membrane pass occupies residues 115 to 137 (VHMQLMEVFYSVTMAARIAYSSY). Residues E121 and R131 each coordinate folate. Residues 138-151 (IFSLVHPSRYQRMA) are Cytoplasmic-facing. The helical transmembrane segment at 152-176 (SYSRAAVLLGVFISSVLGQALVTVG) threads the bilayer. V162 contributes to the folate binding site. Residues 177 to 181 (HISTY) are Extracellular-facing. A helical membrane pass occupies residues 182-200 (TLNCVSLGFILFSLVLSLF). The Cytoplasmic portion of the chain corresponds to 201–266 (LKRPKRSLFF…ELVENARQPQ (66 aa)). Residues 267–292 (LRLWCLWWVFNSSGYYLITYYVHVLW) form a helical membrane-spanning segment. Residues Y281, Y282, and Y286 each coordinate folate. The Extracellular segment spans residues 293–300 (RSTDSSLS). A helical transmembrane segment spans residues 301–323 (YNGAVDAASTLLSAITSFSAGFL). Residues 324–329 (SIRWTL) lie on the Cytoplasmic side of the membrane. Residues 330–350 (WSKLVIAGVIAIQASLVFCMF) form a helical membrane-spanning segment. The Extracellular portion of the chain corresponds to 351 to 353 (QIR). The helical transmembrane segment at 354-377 (DIWVCYVTFVLFRGAYQFLVPIAT) threads the bilayer. Folate contacts are provided by R366 and Q370. The Cytoplasmic segment spans residues 378–391 (FQIASSLSKELCAL). A helical transmembrane segment spans residues 392–415 (VFGINTFLATALKTCITLVVSDKR). The segment at 400–412 (ATALKTCITLVVS) is required for substrate-binding. Topologically, residues 416-423 (GLGLQVRD) are extracellular. Residues 424–448 (QFRIYFIYFLMLSITCFAWAGLDGL) traverse the membrane as a helical segment. Residues 449 to 512 (RYCQRGRHQP…RGDLRVEAKA (64 aa)) lie on the Cytoplasmic side of the membrane. A phosphoserine mark is found at S467, S472, and S477. Positions 478 to 512 (LQDGDLRGPQPSAPQLLSEDGMEDDRGDLRVEAKA) are disordered.

Belongs to the reduced folate carrier (RFC) transporter (TC 2.A.48) family.

The protein resides in the cell membrane. It localises to the apical cell membrane. It is found in the basolateral cell membrane. The catalysed reaction is 5-amino-1-(5-phospho-beta-D-ribosyl)imidazole-4-carboxamide(in) + (6S)-5-methyl-5,6,7,8-tetrahydrofolate(out) = 5-amino-1-(5-phospho-beta-D-ribosyl)imidazole-4-carboxamide(out) + (6S)-5-methyl-5,6,7,8-tetrahydrofolate(in). Functionally, antiporter that mediates the import of reduced folates, driven by the export of organic anions. Also acts as an importer of immunoreactive cyclic dinucleotides, but with a lower transporter activity. Mechanistically, acts as a secondary active transporter, which exports intracellular organic anions down their concentration gradients to facilitate the uptake of its substrates. Has high affinity for N5-methyltetrahydrofolate, the predominant circulating form of folate. Also mediates the import of antifolate drug methotrexate. 5-amino-4-imidazolecarboxamide riboside (AICAR), when phosphorylated to AICAR monophosphate, can serve as an organic anion for antiporter activity. The protein is Reduced folate transporter of Mus musculus (Mouse).